A 447-amino-acid chain; its full sequence is MKPVIALVGRPNVGKSTLFNRMTRSRDALVADLPGLTRDRHYGEGRIGDRPFIVIDTGGFEPVAKEGIVAEMAKQTRQAVVEADVVIFLVDGRLGLAPQDRVIADYLRKTGRRVMLAINKAEGMKYTSVAADFYELGMGDPYAISSTHGDGVRELVDEALDLAVQERPELADQEDAGQHGVKIAIVGRPNVGKSTLVNTLIGEERVIAFDMPGTTRDAIYVEFERGGKPYTLIDTAGLRKRGKVFEAIEKFSVVKTLQSIADANVVVLLLDAQQDISEQDAHIAGFIVESGRALVVGVNKWDGLDGHQRDRVKHDLERKLQFLSFANIHFVSARERTGIGALLRSVDDAYAAAMIKLPTPQITRVLQEAVEFQQPKRVGVSRPKLRYAHQGGSNPPIIVVHGNALSGVTDAYRRYLENRFRTAFKLKGTPLRIEFRTNKNPYAESKD.

2 EngA-type G domains span residues 3–167 (PVIA…VQER) and 181–354 (VKIA…AAAM). Residues 9-16 (GRPNVGKS), 56-60 (DTGGF), 119-122 (NKAE), 187-194 (GRPNVGKS), 234-238 (DTAGL), and 299-302 (NKWD) contribute to the GTP site. A KH-like domain is found at 355-439 (IKLPTPQITR…PLRIEFRTNK (85 aa)).

It belongs to the TRAFAC class TrmE-Era-EngA-EngB-Septin-like GTPase superfamily. EngA (Der) GTPase family. In terms of assembly, associates with the 50S ribosomal subunit.

Functionally, GTPase that plays an essential role in the late steps of ribosome biogenesis. The sequence is that of GTPase Der from Cupriavidus metallidurans (strain ATCC 43123 / DSM 2839 / NBRC 102507 / CH34) (Ralstonia metallidurans).